The sequence spans 737 residues: DNA polymerase iota (737 aa).

The UmuC domain occupies 17-231 (IIHLDMDYFY…GDLKRVTGIG (215 aa)). Asp21 serves as a coordination point for Mg(2+). A 2'-deoxyribonucleoside 5'-triphosphate is bound by residues Tyr26 and Arg58. Asp113 contributes to the Mg(2+) binding site. Glu114 is an active-site residue. DNA-binding regions lie at residues 212–277 (TYAE…FGRD) and 288–413 (KTIG…SKFQ). 4 disordered regions span residues 443–464 (TSLT…RSSP), 482–515 (SPVP…SPKK), 557–581 (DSEK…RFRT), and 607–643 (LSSN…PSPT). Residues 491–502 (GSESAATNSDFS) show a composition bias toward polar residues. Composition is skewed to low complexity over residues 563–577 (PMST…APAP), 607–618 (LSSNASSTASSP), and 632–643 (PSTTTLPFPSPT). The short motif at 669–686 (VDAEVFKELPVELQTELI) is the Ubiquitin-binding (UBM) element.

It belongs to the DNA polymerase type-Y family. Requires Mg(2+) as cofactor. Mn(2+) is required as a cofactor.

It localises to the nucleus. It catalyses the reaction DNA(n) + a 2'-deoxyribonucleoside 5'-triphosphate = DNA(n+1) + diphosphate. Its function is as follows. Error-prone DNA polymerase specifically involved in DNA repair. Plays an important role in translesion synthesis, where the normal high-fidelity DNA polymerases cannot proceed and DNA synthesis stalls. Favors Hoogsteen base-pairing in the active site. Inserts the correct base with higher fidelity opposite an adenosine template. Exhibits low fidelity and efficiency opposite a thymidine template, where it will preferentially insert guanosine. Forms a Schiff base with 5'-deoxyribose phosphate at abasic sites, but may not have lyase activity. The protein is DNA polymerase iota of Drosophila melanogaster (Fruit fly).